A 729-amino-acid chain; its full sequence is DNA topoisomerase 3 (729 aa).

A Toprim domain is found at 3–136; it reads KSVVIAEKPS…IKRLWISSVT (134 aa). Glu-9 and Asp-105 together coordinate Mg(2+). Residues 153-594 enclose the Topo IA-type catalytic domain; sequence YDNLYASAVA…EMKNYTKEIV (442 aa). The segment at 187–192 is interaction with DNA; that stretch reads NCGRVQ. The active-site O-(5'-phospho-DNA)-tyrosine intermediate is Tyr-310. The span at 686 to 713 shows a compositional bias: basic and acidic residues; that stretch reads ERRKKESGNKADKRDVQKYMKQQKKEEE. The disordered stretch occupies residues 686–718; the sequence is ERRKKESGNKADKRDVQKYMKQQKKEEEPLNNP.

It belongs to the type IA topoisomerase family. The cofactor is Mg(2+).

It carries out the reaction ATP-independent breakage of single-stranded DNA, followed by passage and rejoining.. Its function is as follows. Releases the supercoiling and torsional tension of DNA, which is introduced during the DNA replication and transcription, by transiently cleaving and rejoining one strand of the DNA duplex. Introduces a single-strand break via transesterification at a target site in duplex DNA. The scissile phosphodiester is attacked by the catalytic tyrosine of the enzyme, resulting in the formation of a DNA-(5'-phosphotyrosyl)-enzyme intermediate and the expulsion of a 3'-OH DNA strand. The free DNA strand then undergoes passage around the unbroken strand, thus removing DNA supercoils. Finally, in the religation step, the DNA 3'-OH attacks the covalent intermediate to expel the active-site tyrosine and restore the DNA phosphodiester backbone. This chain is DNA topoisomerase 3, found in Bacillus thuringiensis subsp. konkukian (strain 97-27).